A 215-amino-acid polypeptide reads, in one-letter code: Probable phosphoglycerate mutase GpmB (215 aa).

Substrate is bound by residues 8 to 15, 21 to 22, arginine 58, 82 to 85, and 151 to 152; these read RHGETLWN, QG, ELNM, and GM. Histidine 9 serves as the catalytic Tele-phosphohistidine intermediate. The Proton donor/acceptor role is filled by glutamate 82.

The protein belongs to the phosphoglycerate mutase family. GpmB subfamily.

It carries out the reaction (2R)-2-phosphoglycerate = (2R)-3-phosphoglycerate. It participates in carbohydrate degradation; glycolysis; pyruvate from D-glyceraldehyde 3-phosphate: step 3/5. The sequence is that of Probable phosphoglycerate mutase GpmB from Yersinia pseudotuberculosis serotype O:1b (strain IP 31758).